We begin with the raw amino-acid sequence, 419 residues long: Phosphoglycerate kinase (419 aa).

Residues 42 to 44 (DLN), R58, 81 to 84 (HLGR), R135, and R168 contribute to the substrate site. Residues K219, E341, and 367-370 (GGDT) each bind ATP.

It belongs to the phosphoglycerate kinase family. As to quaternary structure, monomer.

It is found in the cytoplasm. The enzyme catalyses (2R)-3-phosphoglycerate + ATP = (2R)-3-phospho-glyceroyl phosphate + ADP. The protein operates within carbohydrate degradation; glycolysis; pyruvate from D-glyceraldehyde 3-phosphate: step 2/5. The sequence is that of Phosphoglycerate kinase from Ralstonia nicotianae (strain ATCC BAA-1114 / GMI1000) (Ralstonia solanacearum).